Reading from the N-terminus, the 152-residue chain is UPF0178 protein KPK_4355 (152 aa).

This sequence belongs to the UPF0178 family.

This Klebsiella pneumoniae (strain 342) protein is UPF0178 protein KPK_4355.